The sequence spans 243 residues: Pleckstrin homology domain-containing family B member 1 (243 aa).

The PH domain maps to 21–128; sequence ALVRGGWLWR…WKTALLEANS (108 aa).

Homodimer. Interacts (via PH domain) with MYO1C. Interacts (via PH domain) with MYO7A. Binds transducins. As to expression, highly expressed in retina and brain. Levels are very low or not detectable in all other tissues tested.

The protein localises to the membrane. It is found in the cytoplasm. The sequence is that of Pleckstrin homology domain-containing family B member 1 (PLEKHB1) from Homo sapiens (Human).